We begin with the raw amino-acid sequence, 276 residues long: NADPH-dependent 7-cyano-7-deazaguanine reductase (276 aa).

83–85 (IES) serves as a coordination point for substrate. 85–86 (SK) contacts NADPH. Catalysis depends on Cys-184, which acts as the Thioimide intermediate. The Proton donor role is filled by Asp-191. Residue 223–224 (HE) coordinates substrate. 252-253 (RG) lines the NADPH pocket.

It belongs to the GTP cyclohydrolase I family. QueF type 2 subfamily. As to quaternary structure, homodimer.

Its subcellular location is the cytoplasm. The enzyme catalyses 7-aminomethyl-7-carbaguanine + 2 NADP(+) = 7-cyano-7-deazaguanine + 2 NADPH + 3 H(+). Its pathway is tRNA modification; tRNA-queuosine biosynthesis. In terms of biological role, catalyzes the NADPH-dependent reduction of 7-cyano-7-deazaguanine (preQ0) to 7-aminomethyl-7-deazaguanine (preQ1). The sequence is that of NADPH-dependent 7-cyano-7-deazaguanine reductase from Pseudomonas savastanoi pv. phaseolicola (strain 1448A / Race 6) (Pseudomonas syringae pv. phaseolicola (strain 1448A / Race 6)).